A 213-amino-acid polypeptide reads, in one-letter code: Pyrrolidone-carboxylate peptidase (213 aa).

Residues Glu81, Cys144, and His166 contribute to the active site.

It belongs to the peptidase C15 family. As to quaternary structure, homodimer.

Its subcellular location is the cytoplasm. The enzyme catalyses Release of an N-terminal pyroglutamyl group from a polypeptide, the second amino acid generally not being Pro.. Functionally, removes 5-oxoproline from various penultimate amino acid residues except L-proline. The polypeptide is Pyrrolidone-carboxylate peptidase (pcp) (Pseudomonas fluorescens).